The primary structure comprises 376 residues: MNNVTNIVRRKSTRIYIGNVPIGDGAPIAVQSMVNTRTTDILETVTQINALKKAGVDIVRISIPTMDAAEAFKIIKQQVINTPLVADIHFDYRIALKVAEYGADCLRINPGNIGNNKRIRSVVHCAQDKNISIRIGVNSGSLERDLQKKYDGNPTENVLLESAMRHVDILDKLNFHQFKVSVKSSDVLITIQAYRALASKIDQPLHIGLTEAGALRNGTVKSAMAVGFLLNEGIGDTIRISLATDPIEEVKVAFDILRALRIRAHGINFIACPGCARQEFNVINVVNALEEKVSDITTPMDVSIIGCVVNGPGEALKSTIGVAGARNKSGIYEDGIRQKKRCDNISIIEELERRIRAKSKLLDPNNHNITPTTYNK.

Residues cysteine 272, cysteine 275, cysteine 307, and glutamate 314 each contribute to the [4Fe-4S] cluster site.

It belongs to the IspG family. [4Fe-4S] cluster is required as a cofactor.

The catalysed reaction is (2E)-4-hydroxy-3-methylbut-2-enyl diphosphate + oxidized [flavodoxin] + H2O + 2 H(+) = 2-C-methyl-D-erythritol 2,4-cyclic diphosphate + reduced [flavodoxin]. Its pathway is isoprenoid biosynthesis; isopentenyl diphosphate biosynthesis via DXP pathway; isopentenyl diphosphate from 1-deoxy-D-xylulose 5-phosphate: step 5/6. Its function is as follows. Converts 2C-methyl-D-erythritol 2,4-cyclodiphosphate (ME-2,4cPP) into 1-hydroxy-2-methyl-2-(E)-butenyl 4-diphosphate. The chain is 4-hydroxy-3-methylbut-2-en-1-yl diphosphate synthase (flavodoxin) from Blochmanniella pennsylvanica (strain BPEN).